Here is a 338-residue protein sequence, read N- to C-terminus: Ornithine carbamoyltransferase, catabolic (338 aa).

Residues 58-61 (STRT), Gln-85, Arg-109, and 136-139 (HPTQ) contribute to the carbamoyl phosphate site. Residues Asn-168, Asp-232, and 236 to 237 (SM) contribute to the L-ornithine site. Carbamoyl phosphate is bound by residues 273–274 (CL) and Arg-318.

The protein belongs to the aspartate/ornithine carbamoyltransferase superfamily. OTCase family.

The protein resides in the cytoplasm. It catalyses the reaction carbamoyl phosphate + L-ornithine = L-citrulline + phosphate + H(+). It participates in amino-acid degradation; L-arginine degradation via ADI pathway; carbamoyl phosphate from L-arginine: step 2/2. In terms of biological role, reversibly catalyzes the transfer of the carbamoyl group from carbamoyl phosphate (CP) to the N(epsilon) atom of ornithine (ORN) to produce L-citrulline. This Streptococcus gordonii (strain Challis / ATCC 35105 / BCRC 15272 / CH1 / DL1 / V288) protein is Ornithine carbamoyltransferase, catabolic.